Here is a 280-residue protein sequence, read N- to C-terminus: F420-dependent methylenetetrahydromethanopterin dehydrogenase (280 aa).

Belongs to the MTD family.

The catalysed reaction is 5,10-methylenetetrahydromethanopterin + oxidized coenzyme F420-(gamma-L-Glu)(n) + 2 H(+) = 5,10-methenyl-5,6,7,8-tetrahydromethanopterin + reduced coenzyme F420-(gamma-L-Glu)(n). It participates in one-carbon metabolism; methanogenesis from CO(2); 5,10-methylene-5,6,7,8-tetrahydromethanopterin from 5,10-methenyl-5,6,7,8-tetrahydromethanopterin (coenzyme F420 route): step 1/1. In terms of biological role, catalyzes the reversible reduction of methenyl-H(4)MPT(+) to methylene-H(4)MPT. This chain is F420-dependent methylenetetrahydromethanopterin dehydrogenase, found in Methanoculleus marisnigri (strain ATCC 35101 / DSM 1498 / JR1).